The primary structure comprises 198 residues: Recombination protein RecR (198 aa).

The C4-type zinc-finger motif lies at 57-72 (CSICGRLTDDDPCSIC). Positions 80–175 (TTILVLEDSR…KVTRLARGLA (96 aa)) constitute a Toprim domain.

The protein belongs to the RecR family.

In terms of biological role, may play a role in DNA repair. It seems to be involved in an RecBC-independent recombinational process of DNA repair. It may act with RecF and RecO. This Streptococcus pneumoniae serotype 2 (strain D39 / NCTC 7466) protein is Recombination protein RecR.